The primary structure comprises 172 residues: Adenine phosphoribosyltransferase (172 aa).

Belongs to the purine/pyrimidine phosphoribosyltransferase family. Homodimer.

The protein localises to the cytoplasm. The enzyme catalyses AMP + diphosphate = 5-phospho-alpha-D-ribose 1-diphosphate + adenine. Its pathway is purine metabolism; AMP biosynthesis via salvage pathway; AMP from adenine: step 1/1. Functionally, catalyzes a salvage reaction resulting in the formation of AMP, that is energically less costly than de novo synthesis. This is Adenine phosphoribosyltransferase from Prochlorococcus marinus (strain NATL2A).